The chain runs to 312 residues: Zinc transporter ZitB (312 aa).

The next 6 helical transmembrane spans lie at leucine 16 to leucine 36, leucine 40 to leucine 60, leucine 81 to valine 101, threonine 117 to leucine 137, leucine 153 to leucine 173, and tryptophan 177 to tryptophan 197.

It belongs to the cation diffusion facilitator (CDF) transporter (TC 2.A.4) family. SLC30A subfamily.

It localises to the cell inner membrane. Involved in zinc efflux across the cytoplasmic membrane, thus reducing zinc accumulation in the cytoplasm and rendering bacteria more resistant to zinc. It may contribute to zinc homeostasis at low concentrations of zinc. The protein is Zinc transporter ZitB of Yersinia pestis.